Here is a 133-residue protein sequence, read N- to C-terminus: Holo-[acyl-carrier-protein] synthase (133 aa).

Mg(2+) is bound by residues aspartate 8 and glutamate 56.

The protein belongs to the P-Pant transferase superfamily. AcpS family. Mg(2+) is required as a cofactor.

Its subcellular location is the cytoplasm. The enzyme catalyses apo-[ACP] + CoA = holo-[ACP] + adenosine 3',5'-bisphosphate + H(+). In terms of biological role, transfers the 4'-phosphopantetheine moiety from coenzyme A to a Ser of acyl-carrier-protein. The sequence is that of Holo-[acyl-carrier-protein] synthase from Clostridium perfringens (strain ATCC 13124 / DSM 756 / JCM 1290 / NCIMB 6125 / NCTC 8237 / Type A).